Consider the following 815-residue polypeptide: SNF1 protein kinase subunit beta-1 (815 aa).

The segment covering 1-11 (MGNSPSTQDPS) has biased composition (polar residues). Disordered stretches follow at residues 1-88 (MGNS…TIDK) and 120-146 (HDVG…TVKR). G2 carries N-myristoyl glycine lipidation. Residues 12 to 31 (HSTKKEHGHHFHDAFNKDRQ) show a composition bias toward basic and acidic residues. The span at 32 to 42 (GSITSQLFNNR) shows a compositional bias: polar residues. S33 is modified (phosphoserine). Composition is skewed to basic and acidic residues over residues 72 to 88 (PSTD…TIDK) and 120 to 129 (HDVGAPEEQV). 6 positions are modified to phosphoserine: S181, S198, S200, S206, S209, and S220. Disordered regions lie at residues 311–335 (HANN…NDDF), 363–389 (HHNK…FASL), and 410–444 (PLHP…SSIS). A compositionally biased stretch (low complexity) spans 313–326 (NNNGNIENNTRNKG). S331 is subject to Phosphoserine. Basic residues predominate over residues 363–376 (HHNKTKKAQSKKIR). Composition is skewed to low complexity over residues 377–389 (SASN…FASL) and 433–444 (HSNSMSSMSSIS). Residues 473-716 (VSTDIASALK…LQQGGNIDAE (244 aa)) form a kinase-interacting sequence (KIS); required for interaction with SNF1 region. S494 and S497 each carry phosphoserine. The tract at residues 581–616 (EPTLDEELPKRPELKRFPSSSRKSSYYSAKGVERPS) is disordered. Residues 587–596 (ELPKRPELKR) are compositionally biased toward basic and acidic residues. The span at 599-608 (SSSRKSSYYS) shows a compositional bias: low complexity. S643 bears the Phosphoserine mark. The segment at 724–804 (SRYPVPDLPI…FITQVVYAPC (81 aa)) is association with SNF1 kinase complex (ASC) domain; required for interaction with SNF4.

Belongs to the 5'-AMP-activated protein kinase beta subunit family. As to quaternary structure, component of the SNF1 kinase complex, a heterotrimeric complex composed of the catalytic alpha subunit SNF1, one of the three related beta subunits SIP1, SIP2 or GAL83, and the regulatory gamma subunit SNF4. The beta subunit serves as a bridge between the catalytic and the regulatory subunit. Interacts (via KIS domain) with SNF1. Interacts (via ASC domain) with SNF4. Post-translationally, phosphorylated by SNF1 in vitro.

The protein resides in the cytoplasm. The protein localises to the vacuole membrane. Functionally, beta subunit of the SNF1 kinase complex, which is required for transcriptional, metabolic, and developmental adaptations in response to glucose limitation. Has a structural role, mediating heterotrimer formation, and a regulatory role, defining carbon source-regulated subcellular location and substrate specificity of the SNF1 kinase complex. Promotes the PKA-regulated relocalization of the SNF1 kinase complex to the vacuolar membrane in response to various types of carbon stress. The polypeptide is SNF1 protein kinase subunit beta-1 (SIP1) (Saccharomyces cerevisiae (strain RM11-1a) (Baker's yeast)).